Here is a 382-residue protein sequence, read N- to C-terminus: MVVPSATTPARQETVVAAAPPAAAASGVVGGGGGVTIATVDMSAERGAVARQVATACAAHGFFRCVGHGVPAAAPVAARLDAATAAFFAMAPAEKQRAGPASPLGYGCRSIGFNGDVGELEYLLLHANPAAVAHRARTIDAMDPSRFSAIVNEYIEAMKKLACEILDLLGEGLGLKDPRYFSKLTTNADSDCLLRINHYPPSCNIHKLDHDDQCNIKSLVSTKASNGGNLMAGGRIGFGEHSDPQILSLLRANDVEGLQVFVPDHEGKEMWVQVPSDPSAIFVNVGDVLQALTNGRLISIRHRVIATACRPRLSTIYFASPPLHARISALPETITASSPRRYRSFTWAEYKTTMYSLRLSHSRLELFKIDDDDSDNASEGKA.

The Fe2OG dioxygenase domain occupies 189 to 321; the sequence is DSDCLLRINH…RLSTIYFASP (133 aa). Position 199 (Y199) interacts with 2-oxoglutarate. 3 residues coordinate Fe cation: H241, D243, and H302. Residues R312 and S314 each coordinate 2-oxoglutarate.

It belongs to the iron/ascorbate-dependent oxidoreductase family. GA2OX subfamily. L-ascorbate is required as a cofactor. Fe(2+) serves as cofactor. As to expression, expressed in roots, shoot apex, and in the basal region of leaf primordia and young leaves.

The catalysed reaction is gibberellin A1 + 2-oxoglutarate + O2 = gibberellin A8 + succinate + CO2. Catalyzes the 2-beta-hydroxylation of several biologically active gibberellins, leading to the homeostatic regulation of their endogenous level. Catabolism of gibberellins (GAs) plays a central role in plant development. Controls the level of bioactive GAs in the shoot apical meristem, which regulates the vegetative to reproductive phase transition. In vitro, converts GA1, GA4, GA9, GA20, and GA44 to the corresponding 2-beta-hydroxylated products GA8, GA34, GA51, GA29, and GA98, respectively. The chain is Gibberellin 2-beta-dioxygenase 1 from Oryza sativa subsp. japonica (Rice).